We begin with the raw amino-acid sequence, 792 residues long: Protein SEY1 homolog 2 (792 aa).

Over 1-638 (MEQIITGDGA…NIKAQANREQ (638 aa)) the chain is Cytoplasmic. Residues 28-245 (GVDYHTVAII…LKDYLFAEKS (218 aa)) form the GB1/RHD3-type G domain. Residue 38–45 (GPQSSGKS) coordinates GTP. The chain crosses the membrane as a helical span at residues 639–659 (IPGWAWLATFLCSSNYIMKLL). Topologically, residues 660–662 (ANP) are lumenal. Residues 663-683 (IFFALAVIIGGIYSILRMLGL) traverse the membrane as a helical segment. Topologically, residues 684 to 792 (QDVAKKTLLD…LTRTQSLEFM (109 aa)) are cytoplasmic. The stretch at 691–718 (LLDKFNSLLKNLTKDENEQEKEGEENEE) forms a coiled coil. Positions 703–792 (TKDENEQEKE…LTRTQSLEFM (90 aa)) are disordered. Over residues 707-723 (NEQEKEGEENEEPEEDQ) the composition is skewed to acidic residues. Polar residues-rich tracts occupy residues 739–751 (SVSQ…SIYK) and 764–774 (IPQTSPLGNND).

This sequence belongs to the TRAFAC class dynamin-like GTPase superfamily. GB1/RHD3 GTPase family. RHD3 subfamily.

The protein resides in the endoplasmic reticulum membrane. Its function is as follows. Probable GTP-binding protein that may be involved in cell development. This Trichomonas vaginalis (strain ATCC PRA-98 / G3) protein is Protein SEY1 homolog 2.